The primary structure comprises 100 residues: NADH-quinone oxidoreductase subunit K 2 (100 aa).

The next 3 helical transmembrane spans lie at L4–I24, I29–L49, and I60–M80.

Belongs to the complex I subunit 4L family. In terms of assembly, NDH-1 is composed of 14 different subunits. Subunits NuoA, H, J, K, L, M, N constitute the membrane sector of the complex.

Its subcellular location is the cell inner membrane. It catalyses the reaction a quinone + NADH + 5 H(+)(in) = a quinol + NAD(+) + 4 H(+)(out). Functionally, NDH-1 shuttles electrons from NADH, via FMN and iron-sulfur (Fe-S) centers, to quinones in the respiratory chain. The immediate electron acceptor for the enzyme in this species is believed to be ubiquinone. Couples the redox reaction to proton translocation (for every two electrons transferred, four hydrogen ions are translocated across the cytoplasmic membrane), and thus conserves the redox energy in a proton gradient. The chain is NADH-quinone oxidoreductase subunit K 2 from Geobacter metallireducens (strain ATCC 53774 / DSM 7210 / GS-15).